A 353-amino-acid chain; its full sequence is Histidinol-phosphate aminotransferase 1 (353 aa).

Lys-211 is subject to N6-(pyridoxal phosphate)lysine.

Belongs to the class-II pyridoxal-phosphate-dependent aminotransferase family. Histidinol-phosphate aminotransferase subfamily. In terms of assembly, homodimer. Pyridoxal 5'-phosphate serves as cofactor.

The catalysed reaction is L-histidinol phosphate + 2-oxoglutarate = 3-(imidazol-4-yl)-2-oxopropyl phosphate + L-glutamate. It functions in the pathway amino-acid biosynthesis; L-histidine biosynthesis; L-histidine from 5-phospho-alpha-D-ribose 1-diphosphate: step 7/9. The polypeptide is Histidinol-phosphate aminotransferase 1 (hisC1) (Nostoc sp. (strain PCC 7120 / SAG 25.82 / UTEX 2576)).